The sequence spans 93 residues: Envelope small membrane protein (93 aa).

Residues 1-11 (MMNLLNKSLEE) lie on the Virion surface side of the membrane. Residues 12 to 32 (NGSVLTAFYIFVAFVALYLLG) traverse the membrane as a helical segment. Residues 33-93 (RALQAFVQAA…NEFPKNGWKQ (61 aa)) are Intravirion-facing.

Belongs to the gammacoronaviruses E protein family. Homooligomer. Interacts with the M membrane protein in the budding compartment of the host cell, which is located between endoplasmic reticulum and the Golgi complex. The cytoplasmic tails of both proteins are important for this function. Interacts with Nucleoprotein.

It is found in the host Golgi apparatus membrane. Its function is as follows. Plays a central role in virus morphogenesis and assembly. Acts as a viroporin and self-assembles in host membranes forming pentameric protein-lipid pores that allow ion transport. Also plays a role in the induction of apoptosis. The sequence is that of Envelope small membrane protein from Avian infectious bronchitis virus (strain Portugal/322/82) (IBV).